The sequence spans 100 residues: Urease subunit gamma (100 aa).

It belongs to the urease gamma subunit family. Heterotrimer of UreA (gamma), UreB (beta) and UreC (alpha) subunits. Three heterotrimers associate to form the active enzyme.

The protein localises to the cytoplasm. The catalysed reaction is urea + 2 H2O + H(+) = hydrogencarbonate + 2 NH4(+). It functions in the pathway nitrogen metabolism; urea degradation; CO(2) and NH(3) from urea (urease route): step 1/1. This chain is Urease subunit gamma, found in Mycobacterium sp. (strain JLS).